The primary structure comprises 580 residues: Phosphatase and actin regulator 1 (580 aa).

2 positions are modified to phosphoserine: Ser67 and Ser78. Residue Thr104 is modified to Phosphothreonine. A Nuclear localization signal motif is present at residues 108-129; sequence RRRSKFANLGRIFKPWKWRKKK. Residues 138–163 form an RPEL 1 repeat; sequence AALERKISMRQSREELIKRGVLKEIY. 2 disordered regions span residues 331–355 and 376–410; these read EQRV…TKAG and KENV…SSLY. Over residues 335–345 the composition is skewed to polar residues; sequence PCSTSYHSSGL. The segment covering 395–407 has biased composition (acidic residues); it reads EEEEEEEDEDDDS. 3 RPEL repeats span residues 422–447, 460–484, and 498–523; these read DSLA…PRQT, TKLT…LKPR, and RRLT…IRFS. The segment at 462-494 is disordered; the sequence is LTRRLSQRPTAEELEQRNILKPRNEQEEQEEKR. Ser467 bears the Phosphoserine mark. The span at 471–494 shows a compositional bias: basic and acidic residues; the sequence is TAEELEQRNILKPRNEQEEQEEKR. Ser505 is modified (phosphoserine).

It belongs to the phosphatase and actin regulator family. In terms of assembly, interacts (via RPEL repeats) with ACTA1 and PPP1CA; ACTA1 and PPP1CA compete for the same binding site. Detected in umbilical vein endothelial cells.

It is found in the cytoplasm. The protein resides in the synapse. It localises to the nucleus. In terms of biological role, binds actin monomers (G actin) and plays a role in multiple processes including the regulation of actin cytoskeleton dynamics, actin stress fibers formation, cell motility and survival, formation of tubules by endothelial cells, and regulation of PPP1CA activity. Involved in the regulation of cortical neuron migration and dendrite arborization. This Homo sapiens (Human) protein is Phosphatase and actin regulator 1 (PHACTR1).